A 441-amino-acid chain; its full sequence is MHIAVVGLSHRTAPVEVREKLSIPEELVEKSFNNLKKIDQILEVSILSTCNRLEIYSLVKDPQLGIEAIKSFLLQFSGLDDEILSPHLFNYVQEKAVSHVMRVSAGLDSLVLGEGQILSQVKKMVRLGQDHHSLGPILNRLLTQAVSTGKRVRSETNLGTGAVSISSAAVELAQLKLGQAHGRDQLMTLETEKVAVVGAGRMSRLLLQHLQSKGCCSLTLLNRTKKRAEDLSAAFPDIQIDCQLIDELDSCLSLSTLVFTSTAANEPIIDAEKLIKIDRKPLLRLIDIGVPRNISSDAKSVSGIESHDVDDLQEVVSRNQEARQKLALEAEGLIEEECRVFLEWWDSLAAVPTINCLRSGLESIRKEELQKALSRMGPDFSARERKVVEALSKGIINKILHTPVTKLRAPQSRNDRRDSLDVIEKLFNLDVSSSLNKPKNN.

Substrate-binding positions include threonine 49–arginine 52, serine 109, glutamate 114–glutamine 116, and glutamine 120. Residue cysteine 50 is the Nucleophile of the active site. Residue glycine 198–serine 203 coordinates NADP(+).

Belongs to the glutamyl-tRNA reductase family. As to quaternary structure, homodimer.

The catalysed reaction is (S)-4-amino-5-oxopentanoate + tRNA(Glu) + NADP(+) = L-glutamyl-tRNA(Glu) + NADPH + H(+). Its pathway is porphyrin-containing compound metabolism; protoporphyrin-IX biosynthesis; 5-aminolevulinate from L-glutamyl-tRNA(Glu): step 1/2. It functions in the pathway porphyrin-containing compound metabolism; chlorophyll biosynthesis. Its function is as follows. Catalyzes the NADPH-dependent reduction of glutamyl-tRNA(Glu) to glutamate 1-semialdehyde (GSA). In Prochlorococcus marinus (strain NATL2A), this protein is Glutamyl-tRNA reductase.